Reading from the N-terminus, the 283-residue chain is Nucleoid occlusion protein (283 aa).

A DNA-binding region (H-T-H motif) is located at residues 148–167; it reads EALAQRLGKGQSTIANKLRL.

It belongs to the ParB family.

Its subcellular location is the cytoplasm. The protein localises to the nucleoid. Effects nucleoid occlusion by binding relatively nonspecifically to DNA and preventing the assembly of the division machinery in the vicinity of the nucleoid, especially under conditions that disturb the cell cycle. It helps to coordinate cell division and chromosome segregation by preventing the formation of the Z ring through the nucleoid, which would cause chromosome breakage. The polypeptide is Nucleoid occlusion protein (noc) (Bacillus subtilis (strain 168)).